The following is a 377-amino-acid chain: Queuine tRNA-ribosyltransferase (377 aa).

D91 (proton acceptor) is an active-site residue. Residues 91–95 (DSGGF), D145, Q189, and G216 each bind substrate. An RNA binding region spans residues 247 to 253 (GVGKPED). D266 functions as the Nucleophile in the catalytic mechanism. Residues 271–275 (TRNAR) are RNA binding; important for wobble base 34 recognition. Residues C304, C306, C309, and H335 each coordinate Zn(2+).

The protein belongs to the queuine tRNA-ribosyltransferase family. As to quaternary structure, homodimer. Within each dimer, one monomer is responsible for RNA recognition and catalysis, while the other monomer binds to the replacement base PreQ1. Zn(2+) is required as a cofactor.

It catalyses the reaction 7-aminomethyl-7-carbaguanine + guanosine(34) in tRNA = 7-aminomethyl-7-carbaguanosine(34) in tRNA + guanine. The protein operates within tRNA modification; tRNA-queuosine biosynthesis. Functionally, catalyzes the base-exchange of a guanine (G) residue with the queuine precursor 7-aminomethyl-7-deazaguanine (PreQ1) at position 34 (anticodon wobble position) in tRNAs with GU(N) anticodons (tRNA-Asp, -Asn, -His and -Tyr). Catalysis occurs through a double-displacement mechanism. The nucleophile active site attacks the C1' of nucleotide 34 to detach the guanine base from the RNA, forming a covalent enzyme-RNA intermediate. The proton acceptor active site deprotonates the incoming PreQ1, allowing a nucleophilic attack on the C1' of the ribose to form the product. After dissociation, two additional enzymatic reactions on the tRNA convert PreQ1 to queuine (Q), resulting in the hypermodified nucleoside queuosine (7-(((4,5-cis-dihydroxy-2-cyclopenten-1-yl)amino)methyl)-7-deazaguanosine). This chain is Queuine tRNA-ribosyltransferase, found in Vibrio parahaemolyticus serotype O3:K6 (strain RIMD 2210633).